We begin with the raw amino-acid sequence, 382 residues long: DNA double-strand break repair protein Mre11 (382 aa).

Mn(2+)-binding residues include D8, H10, D49, and D84. The active-site Proton donor is H85. Residues H156, H187, and H189 each coordinate Mn(2+).

Belongs to the MRE11/RAD32 family. Homodimer. Forms a heterotetramer composed of two Mre11 subunits and two Rad50 subunits. Interacts with Rad50 and HerA. Requires Mn(2+) as cofactor.

With respect to regulation, nuclease activity is regulated by Rad50. Functionally, part of the Rad50/Mre11 complex, which is involved in the early steps of DNA double-strand break (DSB) repair. The complex may facilitate opening of the processed DNA ends to aid in the recruitment of HerA and NurA. Mre11 binds to DSB ends and has both double-stranded 3'-5' exonuclease activity and single-stranded endonuclease activity. Recruited immediately to chromosomal DNA after gamma irradiation, and remains DNA bound in the course of DNA repair. The polypeptide is DNA double-strand break repair protein Mre11 (Sulfolobus acidocaldarius (strain ATCC 33909 / DSM 639 / JCM 8929 / NBRC 15157 / NCIMB 11770)).